A 631-amino-acid chain; its full sequence is Quinoprotein alcohol dehydrogenase PedE (631 aa).

An N-terminal signal peptide occupies residues 1–33 (MTIRSLPALSPLALSVRVLLMAGSLALGNVATA). Ca(2+) is bound by residues Asp-53, Thr-56, and Asp-59. Glu-103 contacts pyrroloquinoline quinone. A disulfide bridge connects residues Cys-147 and Cys-148. Residues Arg-153, Thr-197, and 215–217 (HGS) contribute to the pyrroloquinoline quinone site. Glu-221 contributes to the Ca(2+) binding site. A disordered region spans residues 250-286 (GRLNGKDSTPTGDVKAPSWPDDPTTETGKVEAWSHGG). Ca(2+) contacts are provided by Asn-308 and Asp-358. The active-site Proton acceptor is the Asp-358. Arg-386 is a pyrroloquinoline quinone binding site. Positions 421–443 (GRPVENPGQRPAKPLPGETKGKP) are disordered. Pyrroloquinoline quinone contacts are provided by Trp-531 and Ala-595.

It belongs to the bacterial PQQ dehydrogenase family. Homodimer. Interacts with cytochrome c550. Pyrroloquinoline quinone serves as cofactor. Ca(2+) is required as a cofactor. In terms of processing, the disulfide ring formed between the two adjacent cysteine residues Cys-147 and Cys-148 is essential for efficient electron transfer at pH 7 from PedE to its natural electron acceptor cytochrome c550.

Its subcellular location is the periplasm. The enzyme catalyses a primary alcohol + 2 Fe(III)-[cytochrome c] = an aldehyde + 2 Fe(II)-[cytochrome c] + 2 H(+). The catalysed reaction is ethanol + 2 Fe(III)-[cytochrome c] = acetaldehyde + 2 Fe(II)-[cytochrome c] + 2 H(+). It catalyses the reaction butan-1-ol + 2 Fe(III)-[cytochrome c] = butanal + 2 Fe(II)-[cytochrome c] + 2 H(+). It carries out the reaction butan-2-ol + 2 Fe(III)-[cytochrome c] = butan-2-one + 2 Fe(II)-[cytochrome c] + 2 H(+). The enzyme catalyses 2-phenylethanol + 2 Fe(III)-[cytochrome c] = 2-phenylacetaldehyde + 2 Fe(II)-[cytochrome c] + 2 H(+). The catalysed reaction is octan-1-ol + 2 Fe(III)-[cytochrome c] = octanal + 2 Fe(II)-[cytochrome c] + 2 H(+). It catalyses the reaction hexan-1-ol + 2 Fe(III)-[cytochrome c] = hexanal + 2 Fe(II)-[cytochrome c] + 2 H(+). It carries out the reaction cinnamyl alcohol + 2 Fe(III)-[cytochrome c] = cinnamaldehyde + 2 Fe(II)-[cytochrome c] + 2 H(+). The enzyme catalyses farnesol + 2 Fe(III)-[cytochrome c] = farnesal + 2 Fe(II)-[cytochrome c] + 2 H(+). The catalysed reaction is an aldehyde + 2 Fe(III)-[cytochrome c] + H2O = a carboxylate + 2 Fe(II)-[cytochrome c] + 3 H(+). It catalyses the reaction acetaldehyde + 2 Fe(III)-[cytochrome c] + H2O = 2 Fe(II)-[cytochrome c] + acetate + 3 H(+). It carries out the reaction butanal + 2 Fe(III)-[cytochrome c] + H2O = butanoate + 2 Fe(II)-[cytochrome c] + 3 H(+). The enzyme catalyses hexanal + 2 Fe(III)-[cytochrome c] + H2O = hexanoate + 2 Fe(II)-[cytochrome c] + 3 H(+). The catalysed reaction is octanal + 2 Fe(III)-[cytochrome c] + H2O = octanoate + 2 Fe(II)-[cytochrome c] + 3 H(+). Alcohol dehydrogenase that catalyzes the oxidation of a range of substrates, including linear and aromatic primary and secondary alcohols, as well as aldehydes, allowing bacterial growth with a variety of volatile organic compounds (VOCs) as carbon and energy sources. Uses a specific inducible cytochrome c550, encoded by the adjacent gene in the locus, as electron acceptor. The protein is Quinoprotein alcohol dehydrogenase PedE of Pseudomonas putida (strain ATCC 47054 / DSM 6125 / CFBP 8728 / NCIMB 11950 / KT2440).